We begin with the raw amino-acid sequence, 245 residues long: Probable phosphatase YcdX (245 aa).

H7, H9, H15, H40, E73, H101, H131, D192, and H194 together coordinate Zn(2+).

The protein belongs to the PHP family. As to quaternary structure, homotrimer. Requires Zn(2+) as cofactor.

This is Probable phosphatase YcdX from Escherichia coli O81 (strain ED1a).